Reading from the N-terminus, the 78-residue chain is U7-lycotoxin-Ls1d (78 aa).

Residues 1-22 (MKLIIFTGLALLLIVSLIDVEA) form the signal peptide. Residues 23 to 26 (QNEG) constitute a propeptide that is removed on maturation.

The protein belongs to the neurotoxin 19 (CSTX) family. 07 (U7-Lctx) subfamily. Contains 4 disulfide bonds. Expressed by the venom gland.

The protein resides in the secreted. This is U7-lycotoxin-Ls1d from Lycosa singoriensis (Wolf spider).